A 331-amino-acid chain; its full sequence is Calcium-binding and coiled-coil domain-containing protein 2 (331 aa).

The CLIR motif lies at 128 to 131 (IMVV). Residues 132 to 309 (INKEKVEEME…EKASWEKEKA (178 aa)) adopt a coiled-coil conformation. The disordered stretch occupies residues 189–310 (KASWEKEKAS…KASWEKEKAP (122 aa)). The LIR-like signature appears at 190 to 193 (ASWE). The segment at 292–302 (KEKASWEEEKA) is interaction with LGALS8.

The protein belongs to the CALCOCO family. Dimer. Part of a complex consisting of CALCOCO2, TAX1BP1 and MYO6. Interacts with MYO6. Interacts with GEMIN4. Interacts with ATG8 family members MAP1LC3A, MAP1LC3B, GABARAP, GABARAPL1 and GABARAPL2. Interacts with ATG8 family member MAP1LC3C. Interacts with LGALS8. Interacts with TOM1; the interaction is indirect and is mediated by MYO6, which acts as a bridge between TOM1 and CALCOCO2. Interacts with AZI2.

It is found in the cytoplasm. Its subcellular location is the perinuclear region. It localises to the cytoskeleton. The protein resides in the cytoplasmic vesicle. The protein localises to the autophagosome membrane. Its function is as follows. Xenophagy-specific receptor required for autophagy-mediated intracellular bacteria degradation. Acts as an effector protein of galectin-sensed membrane damage that restricts the proliferation of infecting pathogens upon entry into the cytosol by targeting LGALS8-associated bacteria for autophagy. Initially orchestrates bacteria targeting to autophagosomes and subsequently ensures pathogen degradation by regulating pathogen-containing autophagosome maturation. Bacteria targeting to autophagosomes relies on its interaction with MAP1LC3A, MAP1LC3B and/or GABARAPL2, whereas regulation of pathogen-containing autophagosome maturation requires the interaction with MAP3LC3C. May play a role in ruffle formation and actin cytoskeleton organization and seems to negatively regulate constitutive secretion. This is Calcium-binding and coiled-coil domain-containing protein 2 from Mus musculus (Mouse).